Here is a 635-residue protein sequence, read N- to C-terminus: UvrABC system protein C (635 aa).

Over residues 1–14 the composition is skewed to polar residues; the sequence is MAQNHMSETMNDIS. The tract at residues 1 to 27 is disordered; that stretch reads MAQNHMSETMNDISAESPDQPEPPRTG. Positions 40 to 117 constitute a GIY-YIG domain; it reads SSPGVYRMLD…IKQLKPKYNV (78 aa). The region spanning 227-262 is the UVR domain; it reads TKIQEELGAEMQAASEAMEYERAAALRDRIKALTQV.

It belongs to the UvrC family. As to quaternary structure, interacts with UvrB in an incision complex.

The protein resides in the cytoplasm. The UvrABC repair system catalyzes the recognition and processing of DNA lesions. UvrC both incises the 5' and 3' sides of the lesion. The N-terminal half is responsible for the 3' incision and the C-terminal half is responsible for the 5' incision. The chain is UvrABC system protein C from Ruegeria sp. (strain TM1040) (Silicibacter sp.).